A 501-amino-acid chain; its full sequence is Probable cytosol aminopeptidase (501 aa).

Residues K268 and D273 each coordinate Mn(2+). The active site involves K280. Mn(2+)-binding residues include D291, D350, and E352. Residue R354 is part of the active site.

The protein belongs to the peptidase M17 family. It depends on Mn(2+) as a cofactor.

It localises to the cytoplasm. The enzyme catalyses Release of an N-terminal amino acid, Xaa-|-Yaa-, in which Xaa is preferably Leu, but may be other amino acids including Pro although not Arg or Lys, and Yaa may be Pro. Amino acid amides and methyl esters are also readily hydrolyzed, but rates on arylamides are exceedingly low.. The catalysed reaction is Release of an N-terminal amino acid, preferentially leucine, but not glutamic or aspartic acids.. In terms of biological role, presumably involved in the processing and regular turnover of intracellular proteins. Catalyzes the removal of unsubstituted N-terminal amino acids from various peptides. In Nitrosococcus oceani (strain ATCC 19707 / BCRC 17464 / JCM 30415 / NCIMB 11848 / C-107), this protein is Probable cytosol aminopeptidase.